Consider the following 572-residue polypeptide: Proteinaceous RNase P 1, chloroplastic/mitochondrial (572 aa).

Residues 1–70 constitute a chloroplast and mitochondrion transit peptide; the sequence is MLRLTCFTPS…SRHLCTLPLA (70 aa). PPR repeat units follow at residues 96–130, 136–174, 175–209, and 210–244; these read PEAL…GVQL, NVLL…KVVP, NEAT…GIQP, and RLRS…EVVP. In terms of domain architecture, PRORP spans 338–565; that stretch reads MDENGVCKCC…DLQTSRQWLC (228 aa). Positions 344 and 347 each coordinate Zn(2+). Mn(2+) is bound by residues Asp-399, Asp-474, Asp-475, and Asp-493. Positions 548 and 565 each coordinate Zn(2+).

It belongs to the PPR family. P subfamily. Mg(2+) is required as a cofactor. Mn(2+) serves as cofactor.

Its subcellular location is the mitochondrion. The protein resides in the plastid. It is found in the chloroplast. The enzyme catalyses Endonucleolytic cleavage of RNA, removing 5'-extranucleotides from tRNA precursor.. In terms of biological role, endonuclease RNase P responsible for the 5' maturation of tRNA precursors. Preferentially cleaves at the unusual cleavage site, but also able to cleave at the classical cleavage site. Also involved in the maturation of mRNAs in mitochondria. In Arabidopsis thaliana (Mouse-ear cress), this protein is Proteinaceous RNase P 1, chloroplastic/mitochondrial (PRORP1).